The following is a 311-amino-acid chain: Methionyl-tRNA formyltransferase (311 aa).

Residue 110–113 (SLLP) participates in (6S)-5,6,7,8-tetrahydrofolate binding.

This sequence belongs to the Fmt family.

It carries out the reaction L-methionyl-tRNA(fMet) + (6R)-10-formyltetrahydrofolate = N-formyl-L-methionyl-tRNA(fMet) + (6S)-5,6,7,8-tetrahydrofolate + H(+). In terms of biological role, attaches a formyl group to the free amino group of methionyl-tRNA(fMet). The formyl group appears to play a dual role in the initiator identity of N-formylmethionyl-tRNA by promoting its recognition by IF2 and preventing the misappropriation of this tRNA by the elongation apparatus. The sequence is that of Methionyl-tRNA formyltransferase from Streptococcus pneumoniae serotype 19F (strain G54).